Consider the following 370-residue polypeptide: Queuine tRNA-ribosyltransferase (370 aa).

The active-site Proton acceptor is the D89. Residues 89–93, D143, Q187, and G214 each bind substrate; that span reads DSGGF. The interval 245 to 251 is RNA binding; sequence GVGTPED. The active-site Nucleophile is D264. Residues 269–273 are RNA binding; important for wobble base 34 recognition; the sequence is TRNAR. The Zn(2+) site is built by C302, C304, C307, and H333.

This sequence belongs to the queuine tRNA-ribosyltransferase family. Homodimer. Within each dimer, one monomer is responsible for RNA recognition and catalysis, while the other monomer binds to the replacement base PreQ1. Requires Zn(2+) as cofactor.

It catalyses the reaction 7-aminomethyl-7-carbaguanine + guanosine(34) in tRNA = 7-aminomethyl-7-carbaguanosine(34) in tRNA + guanine. The protein operates within tRNA modification; tRNA-queuosine biosynthesis. Its function is as follows. Catalyzes the base-exchange of a guanine (G) residue with the queuine precursor 7-aminomethyl-7-deazaguanine (PreQ1) at position 34 (anticodon wobble position) in tRNAs with GU(N) anticodons (tRNA-Asp, -Asn, -His and -Tyr). Catalysis occurs through a double-displacement mechanism. The nucleophile active site attacks the C1' of nucleotide 34 to detach the guanine base from the RNA, forming a covalent enzyme-RNA intermediate. The proton acceptor active site deprotonates the incoming PreQ1, allowing a nucleophilic attack on the C1' of the ribose to form the product. After dissociation, two additional enzymatic reactions on the tRNA convert PreQ1 to queuine (Q), resulting in the hypermodified nucleoside queuosine (7-(((4,5-cis-dihydroxy-2-cyclopenten-1-yl)amino)methyl)-7-deazaguanosine). The chain is Queuine tRNA-ribosyltransferase from Azoarcus sp. (strain BH72).